Consider the following 259-residue polypeptide: Insulin-induced gene 1 protein (259 aa).

Topologically, residues 1 to 66 (MPRLHDHVWS…ARPGSWHHDL (66 aa)) are cytoplasmic. Residues 33–57 (PQGPGAPEPEPAPRGQREGTAGFSA) form a disordered region. A helical transmembrane segment spans residues 67–89 (VQRSLVLFSFGVVLALVLNLLQI). Over 90–108 (QRNVTLFPDEVIATIFSSA) the chain is Extracellular. The helical transmembrane segment at 109-126 (WWVPPCCGTAAAVVGLLY) threads the bilayer. Residues 127 to 141 (PCIDSHLGEPHKFKR) lie on the Cytoplasmic side of the membrane. Residues Lys-138 and Lys-140 each participate in a glycyl lysine isopeptide (Lys-Gly) (interchain with G-Cter in ubiquitin) cross-link. Residues 142-164 (EWASVMRCIAVFVGINHASAKLD) traverse the membrane as a helical segment. The Extracellular segment spans residues 165-167 (FAN). A helical transmembrane segment spans residues 168–186 (NVQLSLTLAALSLGLWWTF). Residues 187-191 (DRSRS) are Cytoplasmic-facing. Ser-189 is subject to Phosphoserine. A helical membrane pass occupies residues 192–213 (GLGLGITIAFLATLITQFLVYN). Topologically, residues 214–227 (GVYQYTSPDFLYIR) are extracellular. A helical transmembrane segment spans residues 228-245 (SWLPCIFFSGGVTVGNIG). Residues 246–259 (RQLAMGVPEKPHSD) lie on the Cytoplasmic side of the membrane. Positions 253–259 (PEKPHSD) match the KxHxx motif.

The protein belongs to the INSIG family. In terms of assembly, interacts with SCAP; interaction is direct and only takes place in the presence of sterols; it prevents interaction between SCAP and the coat protein complex II (COPII). Associates with the SCAP-SREBP complex (composed of SCAP and SREBF1/SREBP1 or SREBF2/SREBP2); association is mediated via its interaction with SCAP and only takes place in the presence of sterols. Interaction with SCAP is mutually exclusive with PAQR3. Interacts with HMGCR (via its SSD); the interaction, accelerated by sterols, leads to the recruitment of HMGCR to AMFR/gp78 for its ubiquitination by the sterol-mediated ERAD pathway. Interacts with AMFR/gp78 (via its membrane domain); the interaction recruits HMCR at the ER membrane for its ubiquitination and degradation by the sterol-mediated ERAD pathway. Interacts with SOAT2/ACAT2; leading to promote recruitment of AMFR/gp78 and subsequent ubiquitination of SOAT2/ACAT2. Interacts with RNF139. Interacts with RNF145. In terms of processing, phosphorylation at Ser-189 by PCK1 reduces binding to oxysterol, disrupting the interaction between INSIG1 and SCAP, thereby promoting nuclear translocation of SREBP proteins (SREBF1/SREBP1 or SREBF2/SREBP2) and subsequent transcription of downstream lipogenesis-related genes. Post-translationally, ubiquitinated by AMFR/gp78 in response to sterol deprivation, leading to its degradation: when the SCAP-SREBP complex becomes dissociated from INSIG1, INSIG1 is then ubiquitinated and degraded in proteasomes. Although ubiquitination is required for rapid INSIG1 degradation, it is not required for release of the SCAP-SREBP complex. Ubiquitinated by RNF139. In terms of tissue distribution, highly expressed in liver and kidney.

It localises to the endoplasmic reticulum membrane. Functionally, oxysterol-binding protein that mediates feedback control of cholesterol synthesis by controlling both endoplasmic reticulum to Golgi transport of SCAP and degradation of HMGCR. Acts as a negative regulator of cholesterol biosynthesis by mediating the retention of the SCAP-SREBP complex in the endoplasmic reticulum, thereby blocking the processing of sterol regulatory element-binding proteins (SREBPs) SREBF1/SREBP1 and SREBF2/SREBP2. Binds oxysterol, including 25-hydroxycholesterol, regulating interaction with SCAP and retention of the SCAP-SREBP complex in the endoplasmic reticulum. In presence of oxysterol, interacts with SCAP, retaining the SCAP-SREBP complex in the endoplasmic reticulum, thereby preventing SCAP from escorting SREBF1/SREBP1 and SREBF2/SREBP2 to the Golgi. Sterol deprivation or phosphorylation by PCK1 reduce oxysterol-binding, disrupting the interaction between INSIG1 and SCAP, thereby promoting Golgi transport of the SCAP-SREBP complex, followed by processing and nuclear translocation of SREBF1/SREBP1 and SREBF2/SREBP2. Also regulates cholesterol synthesis by regulating degradation of HMGCR: initiates the sterol-mediated ubiquitin-mediated endoplasmic reticulum-associated degradation (ERAD) of HMGCR via recruitment of the reductase to the ubiquitin ligases AMFR/gp78 and/or RNF139. Also regulates degradation of SOAT2/ACAT2 when the lipid levels are low: initiates the ubiquitin-mediated degradation of SOAT2/ACAT2 via recruitment of the ubiquitin ligases AMFR/gp78. The protein is Insulin-induced gene 1 protein of Rattus norvegicus (Rat).